Consider the following 347-residue polypeptide: NADH-ubiquinone oxidoreductase chain 2 (347 aa).

Transmembrane regions (helical) follow at residues 1-21 (MNPL…TIVM), 25-45 (HWLV…PVLM), 59-79 (YFLT…INLI), 96-116 (IIMT…FWVP), 122-142 (IQLS…ISIL), 150-170 (NLNL…WGGL), 201-221 (ALLN…VFML), 242-262 (TALL…GFLP), 274-294 (NSVI…YFYM), and 326-346 (LSPL…LTLL).

Belongs to the complex I subunit 2 family. As to quaternary structure, core subunit of respiratory chain NADH dehydrogenase (Complex I) which is composed of 45 different subunits. Interacts with TMEM242.

It localises to the mitochondrion inner membrane. It carries out the reaction a ubiquinone + NADH + 5 H(+)(in) = a ubiquinol + NAD(+) + 4 H(+)(out). Its function is as follows. Core subunit of the mitochondrial membrane respiratory chain NADH dehydrogenase (Complex I) which catalyzes electron transfer from NADH through the respiratory chain, using ubiquinone as an electron acceptor. Essential for the catalytic activity and assembly of complex I. The chain is NADH-ubiquinone oxidoreductase chain 2 from Eidolon helvum (Straw-colored fruit bat).